The chain runs to 293 residues: Small ribosomal subunit protein uS2 (293 aa).

A disordered region spans residues 219 to 293; the sequence is IASAKPDEPY…WATPKTEDWA (75 aa).

The protein belongs to the universal ribosomal protein uS2 family. Component of the small ribosomal subunit. Mature ribosomes consist of a small (40S) and a large (60S) subunit. The 40S subunit contains about 33 different proteins and 1 molecule of RNA (18S). The 60S subunit contains about 49 different proteins and 3 molecules of RNA (28S, 5.8S and 5S). Interacts with ribosomal protein S21.

Its subcellular location is the cytoplasm. Required for the assembly and/or stability of the 40S ribosomal subunit. Required for the processing of the 20S rRNA-precursor to mature 18S rRNA in a late step of the maturation of 40S ribosomal subunits. This is Small ribosomal subunit protein uS2 from Hydra viridissima (Green hydra).